A 310-amino-acid chain; its full sequence is Nucleotide-binding protein BAD_0837 (310 aa).

31–38 (GMSGAGRS) is a binding site for ATP. 82–85 (DVRS) is a GTP binding site.

It belongs to the RapZ-like family.

Its function is as follows. Displays ATPase and GTPase activities. The polypeptide is Nucleotide-binding protein BAD_0837 (Bifidobacterium adolescentis (strain ATCC 15703 / DSM 20083 / NCTC 11814 / E194a)).